A 416-amino-acid polypeptide reads, in one-letter code: Adrenocortical dysplasia protein (416 aa).

Positions 11-13 match the PWI motif; it reads PWI. Serine 25 carries the post-translational modification Phosphoserine. The interaction with POT1 stretch occupies residues 156-245; the sequence is ESASSSAGLT…SSTGSSQKAR (90 aa). Residues 234 to 251 are compositionally biased toward polar residues; the sequence is ILSSTGSSQKARGTSASP. The disordered stretch occupies residues 234-306; that stretch reads ILSSTGSSQK…TSPPCNSTPS (73 aa). Residues 259-272 show a composition bias toward low complexity; it reads SGASVSLLSALATS. The segment covering 273 to 292 has biased composition (polar residues); that stretch reads DPGQMDSSQSPPAVGSTSPR. Serine 313 and serine 317 each carry phosphoserine. A Glycyl lysine isopeptide (Lys-Gly) (interchain with G-Cter in SUMO2) cross-link involves residue lysine 345.

In terms of assembly, component of the shelterin complex (telosome) composed of TERF1, TERF2, TINF2, TERF2IP ACD and POT1. Forms heterodimers with POT1. Identified in a complex with POT1 and single-stranded telomeric DNA. Interacts with STN1 and TINF2. Ubiquitous.

Its subcellular location is the nucleus. The protein localises to the chromosome. The protein resides in the telomere. Component of the shelterin complex (telosome) that is involved in the regulation of telomere length and protection. Shelterin associates with arrays of double-stranded TTAGGG repeats added by telomerase and protects chromosome ends. Without its protective activity, telomeres are no longer hidden from the DNA damage surveillance and chromosome ends are inappropriately processed by DNA repair pathways. Promotes binding of POT1 to single-stranded telomeric DNA. Modulates the inhibitory effects of POT1 on telomere elongation. The ACD-POT1 heterodimer enhances telomere elongation by recruiting telomerase to telomeres and increasing its processivity. May play a role in organogenesis. This chain is Adrenocortical dysplasia protein, found in Mus musculus (Mouse).